The chain runs to 341 residues: L-threonine 3-dehydrogenase (341 aa).

Cys-38 provides a ligand contact to Zn(2+). Active-site charge relay system residues include Thr-40 and His-43. Zn(2+) contacts are provided by His-63, Glu-64, Cys-93, Cys-96, Cys-99, and Cys-107. NAD(+) is bound by residues Ile-175, Asp-195, Arg-200, Leu-262 to Ile-264, and Ile-286 to Tyr-287.

The protein belongs to the zinc-containing alcohol dehydrogenase family. As to quaternary structure, homotetramer. Zn(2+) serves as cofactor.

Its subcellular location is the cytoplasm. It carries out the reaction L-threonine + NAD(+) = (2S)-2-amino-3-oxobutanoate + NADH + H(+). Its pathway is amino-acid degradation; L-threonine degradation via oxydo-reductase pathway; glycine from L-threonine: step 1/2. In terms of biological role, catalyzes the NAD(+)-dependent oxidation of L-threonine to 2-amino-3-ketobutyrate. The chain is L-threonine 3-dehydrogenase from Shewanella frigidimarina (strain NCIMB 400).